A 447-amino-acid chain; its full sequence is Phosphoglucosamine mutase (447 aa).

Serine 100 (phosphoserine intermediate) is an active-site residue. Mg(2+)-binding residues include serine 100, aspartate 239, aspartate 241, and aspartate 243. Serine 100 is subject to Phosphoserine.

This sequence belongs to the phosphohexose mutase family. Mg(2+) is required as a cofactor. Activated by phosphorylation.

The catalysed reaction is alpha-D-glucosamine 1-phosphate = D-glucosamine 6-phosphate. Its function is as follows. Catalyzes the conversion of glucosamine-6-phosphate to glucosamine-1-phosphate. The chain is Phosphoglucosamine mutase from Caldanaerobacter subterraneus subsp. tengcongensis (strain DSM 15242 / JCM 11007 / NBRC 100824 / MB4) (Thermoanaerobacter tengcongensis).